Consider the following 212-residue polypeptide: Adenylate kinase (212 aa).

Residue 10 to 15 participates in ATP binding; it reads GAGKGT. Residues 30 to 59 form an NMP region; the sequence is AIGDIFRTIIKTSTSEAELINNYVKQGELI. Residues Arg36, 57-59, 85-88, and Gln92 each bind AMP; these read ELI and GYPR. An LID region spans residues 122-160; sequence GRYSCKNCGKIYNRYFLQPKTDNVCDVCGSSTFDYRKDD. Arg123 is a binding site for ATP. Residues Cys126 and Cys129 each contribute to the Zn(2+) site. 132-133 provides a ligand contact to ATP; the sequence is IY. 2 residues coordinate Zn(2+): Cys146 and Cys149. Arg157 and Arg168 together coordinate AMP. Lys196 serves as a coordination point for ATP.

Belongs to the adenylate kinase family. In terms of assembly, monomer.

The protein resides in the cytoplasm. The catalysed reaction is AMP + ATP = 2 ADP. Its pathway is purine metabolism; AMP biosynthesis via salvage pathway; AMP from ADP: step 1/1. Its function is as follows. Catalyzes the reversible transfer of the terminal phosphate group between ATP and AMP. Plays an important role in cellular energy homeostasis and in adenine nucleotide metabolism. This Rickettsia africae (strain ESF-5) protein is Adenylate kinase.